A 386-amino-acid polypeptide reads, in one-letter code: Succinate--CoA ligase [ADP-forming] subunit beta (386 aa).

The ATP-grasp domain maps to 9–244 (KHILSRFGVS…YDEEIKEEIE (236 aa)). Residues Lys-46, 53–55 (GRG), Glu-99, Cys-102, and Glu-107 contribute to the ATP site. Positions 199 and 213 each coordinate Mg(2+). Residues Asn-264 and 320–322 (GIM) contribute to the substrate site.

This sequence belongs to the succinate/malate CoA ligase beta subunit family. As to quaternary structure, heterotetramer of two alpha and two beta subunits. Requires Mg(2+) as cofactor.

It catalyses the reaction succinate + ATP + CoA = succinyl-CoA + ADP + phosphate. The enzyme catalyses GTP + succinate + CoA = succinyl-CoA + GDP + phosphate. It participates in carbohydrate metabolism; tricarboxylic acid cycle; succinate from succinyl-CoA (ligase route): step 1/1. Functionally, succinyl-CoA synthetase functions in the citric acid cycle (TCA), coupling the hydrolysis of succinyl-CoA to the synthesis of either ATP or GTP and thus represents the only step of substrate-level phosphorylation in the TCA. The beta subunit provides nucleotide specificity of the enzyme and binds the substrate succinate, while the binding sites for coenzyme A and phosphate are found in the alpha subunit. This chain is Succinate--CoA ligase [ADP-forming] subunit beta, found in Ehrlichia canis (strain Jake).